Consider the following 238-residue polypeptide: tRNA (guanine-N(7)-)-methyltransferase (238 aa).

S-adenosyl-L-methionine is bound by residues Glu-68, Glu-93, Asp-120, and Asp-143. Residue Asp-143 is part of the active site. Residues Lys-147, Asp-179, and 216–219 contribute to the substrate site; that span reads TKFE.

It belongs to the class I-like SAM-binding methyltransferase superfamily. TrmB family.

The catalysed reaction is guanosine(46) in tRNA + S-adenosyl-L-methionine = N(7)-methylguanosine(46) in tRNA + S-adenosyl-L-homocysteine. Its pathway is tRNA modification; N(7)-methylguanine-tRNA biosynthesis. Its function is as follows. Catalyzes the formation of N(7)-methylguanine at position 46 (m7G46) in tRNA. In Shewanella baltica (strain OS195), this protein is tRNA (guanine-N(7)-)-methyltransferase.